The chain runs to 64 residues: Defensin beta 4A (64 aa).

An N-terminal signal peptide occupies residues 1 to 23 (MRVLYLLFSFLFIFLMPLPGVFG). Disulfide bonds link C31–C60, C38–C53, and C43–C61. The segment at 33–48 (KSGAICHPVFCPRRYK) is phosphatidylinositol 4,5-bisphosphate (PIP2) binding.

Belongs to the beta-defensin family. LAP/TAP subfamily. As to quaternary structure, monomer. Homodimer. As to expression, expressed in lung epithelial cells (at protein level). Expressed in foreskin, lung and trachea. Lower expression in kidney, uterus and salivary gland tissue. Expressed in epithelial cells of the respiratory tract, with higher expression in distal parenchyma of the lung, trachea, and tonsils, and lower expression in pharynx and adenoid, and low expression in tongue and larynx.

Its subcellular location is the secreted. Functionally, exhibits antimicrobial activity against Gram-negative bacteria and Gram-positive bacteria, with highest activity against Gram-negative bacteria. Antimicrobial activity against P.aruginosa seems to be salt-sensitive and is reduced with high salt concentrations greater than 25 mM. Also exhibits antimicrobial activity against the yeast C.albicans. Permeabilizes C.albicans cell membranes via targeting plasma membrane lipid phosphatidylinositol 4,5-bisphosphate (PIP2), thereby leading to cell fragmentation and cell death. Acts as a ligand for C-C chemokine receptor CCR6. Binds to CCR6 and induces chemotactic activity of CCR6-expressing cells, such as immature dendritic cells and memory T cells. This is Defensin beta 4A (DEFB4A) from Homo sapiens (Human).